The chain runs to 404 residues: Cysteine desulfurase IscS (404 aa).

Pyridoxal 5'-phosphate-binding positions include A75–T76, N155, Q183, and S203–H205. The residue at position 206 (K206) is an N6-(pyridoxal phosphate)lysine. T243 serves as a coordination point for pyridoxal 5'-phosphate. Residue C328 is the Cysteine persulfide intermediate of the active site. C328 serves as a coordination point for [2Fe-2S] cluster.

Belongs to the class-V pyridoxal-phosphate-dependent aminotransferase family. NifS/IscS subfamily. Homodimer. Forms a heterotetramer with IscU, interacts with other sulfur acceptors. The cofactor is pyridoxal 5'-phosphate.

Its subcellular location is the cytoplasm. The catalysed reaction is (sulfur carrier)-H + L-cysteine = (sulfur carrier)-SH + L-alanine. It functions in the pathway cofactor biosynthesis; iron-sulfur cluster biosynthesis. Its function is as follows. Master enzyme that delivers sulfur to a number of partners involved in Fe-S cluster assembly, tRNA modification or cofactor biosynthesis. Catalyzes the removal of elemental sulfur atoms from cysteine to produce alanine. Functions as a sulfur delivery protein for Fe-S cluster synthesis onto IscU, an Fe-S scaffold assembly protein, as well as other S acceptor proteins. The chain is Cysteine desulfurase IscS from Pseudomonas putida (strain GB-1).